Reading from the N-terminus, the 315-residue chain is Homoserine kinase (315 aa).

97–107 (PPARGLGSSAT) is an ATP binding site.

It belongs to the GHMP kinase family. Homoserine kinase subfamily.

It is found in the cytoplasm. The catalysed reaction is L-homoserine + ATP = O-phospho-L-homoserine + ADP + H(+). It participates in amino-acid biosynthesis; L-threonine biosynthesis; L-threonine from L-aspartate: step 4/5. Functionally, catalyzes the ATP-dependent phosphorylation of L-homoserine to L-homoserine phosphate. The sequence is that of Homoserine kinase from Prochlorococcus marinus (strain MIT 9312).